A 318-amino-acid polypeptide reads, in one-letter code: Aspartate carbamoyltransferase catalytic subunit (318 aa).

Arg67 and Thr68 together coordinate carbamoyl phosphate. Lys95 provides a ligand contact to L-aspartate. Positions 117, 145, and 148 each coordinate carbamoyl phosphate. 2 residues coordinate L-aspartate: Arg178 and Arg236. Residues Gly277 and Pro278 each contribute to the carbamoyl phosphate site.

The protein belongs to the aspartate/ornithine carbamoyltransferase superfamily. ATCase family. Heterododecamer (2C3:3R2) of six catalytic PyrB chains organized as two trimers (C3), and six regulatory PyrI chains organized as three dimers (R2).

The enzyme catalyses carbamoyl phosphate + L-aspartate = N-carbamoyl-L-aspartate + phosphate + H(+). Its pathway is pyrimidine metabolism; UMP biosynthesis via de novo pathway; (S)-dihydroorotate from bicarbonate: step 2/3. Catalyzes the condensation of carbamoyl phosphate and aspartate to form carbamoyl aspartate and inorganic phosphate, the committed step in the de novo pyrimidine nucleotide biosynthesis pathway. The protein is Aspartate carbamoyltransferase catalytic subunit of Roseiflexus castenholzii (strain DSM 13941 / HLO8).